Here is a 136-residue protein sequence, read N- to C-terminus: Large ribosomal subunit protein uL16 (136 aa).

Belongs to the universal ribosomal protein uL16 family. Part of the 50S ribosomal subunit.

In terms of biological role, binds 23S rRNA and is also seen to make contacts with the A and possibly P site tRNAs. In Vibrio atlanticus (strain LGP32) (Vibrio splendidus (strain Mel32)), this protein is Large ribosomal subunit protein uL16.